The following is a 229-amino-acid chain: Lipoprotein-releasing system ATP-binding protein LolD (229 aa).

The 221-residue stretch at 9 to 229 (LRLEQVARRY…TIREGQIVPA (221 aa)) folds into the ABC transporter domain. An ATP-binding site is contributed by 45 to 52 (APSGTGKS).

It belongs to the ABC transporter superfamily. Lipoprotein translocase (TC 3.A.1.125) family. In terms of assembly, the complex is composed of two ATP-binding proteins (LolD) and two transmembrane proteins (LolC and LolE).

The protein localises to the cell inner membrane. Functionally, part of the ABC transporter complex LolCDE involved in the translocation of mature outer membrane-directed lipoproteins, from the inner membrane to the periplasmic chaperone, LolA. Responsible for the formation of the LolA-lipoprotein complex in an ATP-dependent manner. The chain is Lipoprotein-releasing system ATP-binding protein LolD from Granulibacter bethesdensis (strain ATCC BAA-1260 / CGDNIH1).